Reading from the N-terminus, the 418-residue chain is MLPNTGRLAGCTVFITGASRGIGKAIALKAAKDGANIVIAAKTAQPHPKLLGTIYTAAEEIEAVGGKALPCIVDVRDEQQISAAVEKAIKKFGGIDILVNNASAISLTNTLDTPTKRLDLMMNVNTRGTYLASKACIPYLKKSKVAHILNISPPLNLNPVWFKQHCAYTIAKYGMSMYVLGMAEEFKGEIAVNALWPKTAIHTAAMDMLGGPGIESQCRKVDIIADAAYSIFQKPKSFTGNFVIDENILKEEGIENFDVYAIKPGHPLQPDFFLDEYPEAVSKKVESTGAVPEFKEEKLQLQPKPRSGAVEETFRIVKDSLSDDVVKATQAIYLFELSGEDGGTWFLDLKSKGGNVGYGEPSDQADVVMSMTTDDFVKMFSGKLKPTMAFMSGKLKIKGNMALAIKLEKLMNQMNARL.

NADP(+) is bound by residues 17–23 (GASRGIG), Lys-42, and Asp-74. Lys-42 is modified (N6-(2-hydroxyisobutyryl)lysine). N6-acetyllysine is present on Lys-116. Tyr-168 acts as the Proton acceptor in catalysis. Lys-172 provides a ligand contact to NADP(+). In terms of domain architecture, SCP2 spans 306–415 (RSGAVEETFR…KLEKLMNQMN (110 aa)). Position 318 is an N6-succinyllysine (Lys-318).

Belongs to the short-chain dehydrogenases/reductases (SDR) family. As to expression, ubiquitous.

It is found in the peroxisome. The protein resides in the mitochondrion. Functionally, has apparently no steroid dehydrogenase activity. Controls bile acid (BA) and lipid metabolism in response to nutritional cues. This Homo sapiens (Human) protein is Hydroxysteroid dehydrogenase-like protein 2.